We begin with the raw amino-acid sequence, 493 residues long: UDP-N-acetylmuramoyl-L-alanyl-D-glutamate--2,6-diaminopimelate ligase (493 aa).

2 residues coordinate UDP-N-acetyl-alpha-D-muramoyl-L-alanyl-D-glutamate: Leu-30 and Ser-32. Residue 117 to 123 participates in ATP binding; sequence GTNGKTT. UDP-N-acetyl-alpha-D-muramoyl-L-alanyl-D-glutamate is bound by residues Asn-158, 159-160, Ser-186, Gln-192, and Arg-194; that span reads TT. At Lys-226 the chain carries N6-carboxylysine. Meso-2,6-diaminopimelate contacts are provided by residues Arg-388, 412 to 415, Gly-463, and Glu-467; that span reads DNPR. Residues 412 to 415 carry the Meso-diaminopimelate recognition motif motif; it reads DNPR.

Belongs to the MurCDEF family. MurE subfamily. Mg(2+) is required as a cofactor. Post-translationally, carboxylation is probably crucial for Mg(2+) binding and, consequently, for the gamma-phosphate positioning of ATP.

Its subcellular location is the cytoplasm. The enzyme catalyses UDP-N-acetyl-alpha-D-muramoyl-L-alanyl-D-glutamate + meso-2,6-diaminopimelate + ATP = UDP-N-acetyl-alpha-D-muramoyl-L-alanyl-gamma-D-glutamyl-meso-2,6-diaminopimelate + ADP + phosphate + H(+). Its pathway is cell wall biogenesis; peptidoglycan biosynthesis. Its function is as follows. Catalyzes the addition of meso-diaminopimelic acid to the nucleotide precursor UDP-N-acetylmuramoyl-L-alanyl-D-glutamate (UMAG) in the biosynthesis of bacterial cell-wall peptidoglycan. This is UDP-N-acetylmuramoyl-L-alanyl-D-glutamate--2,6-diaminopimelate ligase from Vibrio parahaemolyticus serotype O3:K6 (strain RIMD 2210633).